The following is a 260-amino-acid chain: Phosphate import ATP-binding protein PstB 2 (260 aa).

Positions 9–255 constitute an ABC transporter domain; sequence IKVKDLSFYY…PLDSRTRDYV (247 aa). Position 41–48 (41–48) interacts with ATP; it reads GPSGCGKS.

This sequence belongs to the ABC transporter superfamily. Phosphate importer (TC 3.A.1.7) family. In terms of assembly, the complex is composed of two ATP-binding proteins (PstB), two transmembrane proteins (PstC and PstA) and a solute-binding protein (PstS).

Its subcellular location is the cell inner membrane. It carries out the reaction phosphate(out) + ATP + H2O = ADP + 2 phosphate(in) + H(+). Part of the ABC transporter complex PstSACB involved in phosphate import. Responsible for energy coupling to the transport system. In Nostoc sp. (strain PCC 7120 / SAG 25.82 / UTEX 2576), this protein is Phosphate import ATP-binding protein PstB 2.